A 208-amino-acid chain; its full sequence is Uracil phosphoribosyltransferase (208 aa).

Residues arginine 78, arginine 103, and 130 to 138 each bind 5-phospho-alpha-D-ribose 1-diphosphate; that span reads DPMLATGGS. Residues isoleucine 193 and 198 to 200 contribute to the uracil site; that span reads GDA. Aspartate 199 contacts 5-phospho-alpha-D-ribose 1-diphosphate.

This sequence belongs to the UPRTase family. Mg(2+) is required as a cofactor.

The catalysed reaction is UMP + diphosphate = 5-phospho-alpha-D-ribose 1-diphosphate + uracil. Its pathway is pyrimidine metabolism; UMP biosynthesis via salvage pathway; UMP from uracil: step 1/1. With respect to regulation, allosterically activated by GTP. Catalyzes the conversion of uracil and 5-phospho-alpha-D-ribose 1-diphosphate (PRPP) to UMP and diphosphate. The chain is Uracil phosphoribosyltransferase from Colwellia psychrerythraea (strain 34H / ATCC BAA-681) (Vibrio psychroerythus).